A 204-amino-acid polypeptide reads, in one-letter code: MGAYKYMQEIYRKKQSDVMRFLLRIRAWQYRHLNKLHRAPRPTRPEKARRLGYKAKQGFVIYRIRIRRGGRKRPVPKGATYGKPKSHGVNQLKPTRNLQSLAEERTGRRLGGLRVLNSYWVAQDSTYKYFEVILVDIRHNVIRKSGSLNWICKHTQKHREMRGKTSAGRKHRGLGRGFHYSQTKGGSRRSCWLRHNTLSLRRKR.

Disordered stretches follow at residues 71-91 (RKRP…GVNQ) and 159-182 (REMR…HYSQ). Residues 159–174 (REMRGKTSAGRKHRGL) show a composition bias toward basic residues.

Belongs to the eukaryotic ribosomal protein eL15 family.

This chain is Large ribosomal subunit protein eL15 (RPL15), found in Faxonius limosus (Spinycheek crayfish).